We begin with the raw amino-acid sequence, 208 residues long: Small ribosomal subunit protein uS4 (208 aa).

The 63-residue stretch at 98–160 (SRLDNVAYNM…AKSYLRIKSS (63 aa)) folds into the S4 RNA-binding domain.

It belongs to the universal ribosomal protein uS4 family. Part of the 30S ribosomal subunit. Contacts protein S5. The interaction surface between S4 and S5 is involved in control of translational fidelity.

Functionally, one of the primary rRNA binding proteins, it binds directly to 16S rRNA where it nucleates assembly of the body of the 30S subunit. With S5 and S12 plays an important role in translational accuracy. The sequence is that of Small ribosomal subunit protein uS4 from Nitrosomonas eutropha (strain DSM 101675 / C91 / Nm57).